The primary structure comprises 355 residues: Ornithine transcarbamylase, mitochondrial (355 aa).

The transit peptide at 1–35 (MLFINLRTLLNNAALRNGHNFVVRNFRCGQPVQDK) directs the protein to the mitochondrion. Lysine 71 bears the N6-acetyllysine; alternate mark. Lysine 71 bears the N6-succinyllysine; alternate mark. Lysine 81 is subject to N6-succinyllysine. Residue lysine 89 is modified to N6-acetyllysine; alternate. Lysine 89 is modified (N6-succinyllysine; alternate). 91 to 95 (STRTR) serves as a coordination point for carbamoyl phosphate. Serine 134 carries the phosphoserine modification. Arginine 142 contributes to the carbamoyl phosphate binding site. An L-ornithine-binding site is contributed by arginine 142. Lysine 145 carries the post-translational modification N6-acetyllysine; alternate. Lysine 145 carries the N6-succinyllysine; alternate modification. A carbamoyl phosphate-binding site is contributed by histidine 169. Residue asparagine 200 coordinates L-ornithine. N6-acetyllysine; alternate occurs at positions 222, 232, and 239. 3 positions are modified to N6-succinyllysine; alternate: lysine 222, lysine 232, and lysine 239. The residue at position 244 (lysine 244) is an N6-acetyllysine. An L-ornithine-binding site is contributed by 264 to 268 (DTWIS). N6-succinyllysine occurs at positions 275 and 290. At lysine 293 the chain carries N6-acetyllysine; alternate. Residue lysine 293 is modified to N6-succinyllysine; alternate. An L-ornithine-binding site is contributed by 303–306 (HCLP). Cysteine 304 is a catalytic residue. At lysine 308 the chain carries N6-acetyllysine; alternate. N6-succinyllysine; alternate is present on lysine 308. A carbamoyl phosphate-binding site is contributed by arginine 331. Arginine 331 is a binding site for L-ornithine.

The protein belongs to the aspartate/ornithine carbamoyltransferase superfamily. OTCase family. As to quaternary structure, homotrimer. In terms of processing, acetylation at Lys-89 negatively regulates ornithine carbamoyltransferase activity in response to nutrient signals.

It localises to the mitochondrion matrix. It carries out the reaction carbamoyl phosphate + L-ornithine = L-citrulline + phosphate + H(+). It functions in the pathway nitrogen metabolism; urea cycle; L-citrulline from L-ornithine and carbamoyl phosphate: step 1/1. Its activity is regulated as follows. Negatively regulated by lysine acetylation. Functionally, catalyzes the second step of the urea cycle, the condensation of carbamoyl phosphate with L-ornithine to form L-citrulline. The urea cycle ensures the detoxification of ammonia by converting it to urea for excretion. This Ovis aries (Sheep) protein is Ornithine transcarbamylase, mitochondrial.